We begin with the raw amino-acid sequence, 320 residues long: Nucleoporin Nup37 (320 aa).

WD repeat units follow at residues 67 to 113, 118 to 157, 160 to 200, and 203 to 242; these read KEQR…FTSL, GHGDYVNDVSWVCDGELLASVSDDFTCRFWTTTGGGENVI, GLSS…TVIS, and SPKFPLMSADWAHSNRLFITSLAGGDVVTWDLNRPYVPAD.

Its subcellular location is the nucleus. The protein resides in the nuclear pore complex. In terms of biological role, as part of the nuclear pore complex (NPC), has a role in its assembly and function. (Microbial infection) Required for optimal replication of E.chaffeensis. In Drosophila melanogaster (Fruit fly), this protein is Nucleoporin Nup37.